Reading from the N-terminus, the 217-residue chain is Ribonuclease T (217 aa).

The Exonuclease domain occupies 20 to 194; sequence VVIDVETGGF…YDTDRTAELF (175 aa). Mg(2+)-binding residues include Asp-23, Glu-25, His-181, and Asp-186. His-181 (proton donor/acceptor) is an active-site residue.

It belongs to the RNase T family. As to quaternary structure, homodimer. Mg(2+) serves as cofactor.

Functionally, trims short 3' overhangs of a variety of RNA species, leaving a one or two nucleotide 3' overhang. Responsible for the end-turnover of tRNA: specifically removes the terminal AMP residue from uncharged tRNA (tRNA-C-C-A). Also appears to be involved in tRNA biosynthesis. The protein is Ribonuclease T of Photorhabdus laumondii subsp. laumondii (strain DSM 15139 / CIP 105565 / TT01) (Photorhabdus luminescens subsp. laumondii).